Reading from the N-terminus, the 144-residue chain is Large ribosomal subunit protein uL13 (144 aa).

Belongs to the universal ribosomal protein uL13 family. As to quaternary structure, part of the 50S ribosomal subunit.

In terms of biological role, this protein is one of the early assembly proteins of the 50S ribosomal subunit, although it is not seen to bind rRNA by itself. It is important during the early stages of 50S assembly. The protein is Large ribosomal subunit protein uL13 of Clostridium perfringens (strain ATCC 13124 / DSM 756 / JCM 1290 / NCIMB 6125 / NCTC 8237 / Type A).